A 230-amino-acid polypeptide reads, in one-letter code: MEKTTPTQYDVKVQYNNSILNYAIDHSDQLTDIQKELIQFTKENIERHIMLTQAEQCSFFKLLIQVLNAKKTIDIGVFTGLSSLTAALAMGDEGRVVACDVSTDYTQHALKFWAKAGVDHKINLKIQPASKTLQELIDQGEENTYDFVFIDADKTGYDTYYELSLKLIRKGGIIAIDNVLQHGRVADPNANVEPNLVAIRALNDKILADKRVTKTMLPIADGITLVTKIN.

Residues Thr-52, Asp-74, 76 to 77 (GV), Ser-82, Asp-100, Ala-129, Asp-151, Asp-153, and Tyr-160 each bind S-adenosyl-L-methionine. Asp-151 contributes to the a divalent metal cation binding site. A divalent metal cation contacts are provided by Asp-177 and Asn-178.

It belongs to the class I-like SAM-binding methyltransferase superfamily. Cation-dependent O-methyltransferase family. CCoAMT subfamily.

The catalysed reaction is (E)-caffeoyl-CoA + S-adenosyl-L-methionine = (E)-feruloyl-CoA + S-adenosyl-L-homocysteine + H(+). The protein is Probable caffeoyl-CoA O-methyltransferase 1 (omt5) of Dictyostelium discoideum (Social amoeba).